The following is a 360-amino-acid chain: MPLSRLIINNFRNLQSLDLELSPNFNFIVGHNGSGKTSLLEAIFYLGHGRSFKSHISNRIIHYQAEDFVLHARIDEGQHQWSVGIQKKRSGDTLLKINGEDGNKISDLAHLLPMQVITPEGLTLLNGGPTFRRAFLDWGLFHQYTEFYSCWANLKRLLKQRNAALHQVRSYAELKPWDIELAKLAEIVSQMRASYAEALRPEIEKTCQFFLPELEIGVSFHQGWEKGTDYAEILAQGFERDKAMGYTMIGPQKADFRFRANGLPVEDVLSRGQLKLLMCVLRLAQGEYLVAQKERQCLFLIDDFASELDPIKRELLAHRLRESGSQVFVTAITKDQLNQMQWQESEQDSLFQVQQGMLTK.

30–37 (GHNGSGKT) contacts ATP.

This sequence belongs to the RecF family.

Its subcellular location is the cytoplasm. Its function is as follows. The RecF protein is involved in DNA metabolism; it is required for DNA replication and normal SOS inducibility. RecF binds preferentially to single-stranded, linear DNA. It also seems to bind ATP. In Actinobacillus pleuropneumoniae serotype 7 (strain AP76), this protein is DNA replication and repair protein RecF.